We begin with the raw amino-acid sequence, 289 residues long: Pantothenate synthetase (289 aa).

30–37 is an ATP binding site; sequence MGNLHEGH. Catalysis depends on H37, which acts as the Proton donor. Position 61 (Q61) interacts with (R)-pantoate. Q61 is a binding site for beta-alanine. 149 to 152 lines the ATP pocket; the sequence is GEKD. Q155 provides a ligand contact to (R)-pantoate. Residue 186–189 coordinates ATP; it reads MSSR.

Belongs to the pantothenate synthetase family. In terms of assembly, homodimer.

It localises to the cytoplasm. It catalyses the reaction (R)-pantoate + beta-alanine + ATP = (R)-pantothenate + AMP + diphosphate + H(+). It participates in cofactor biosynthesis; (R)-pantothenate biosynthesis; (R)-pantothenate from (R)-pantoate and beta-alanine: step 1/1. In terms of biological role, catalyzes the condensation of pantoate with beta-alanine in an ATP-dependent reaction via a pantoyl-adenylate intermediate. In Psychromonas ingrahamii (strain DSM 17664 / CCUG 51855 / 37), this protein is Pantothenate synthetase.